A 105-amino-acid polypeptide reads, in one-letter code: SH3 domain-binding glutamic acid-rich-like protein 2 (105 aa).

The SH3-binding motif lies at 61 to 67 (KGNPLPP).

The protein belongs to the SH3BGR family.

It is found in the nucleus. This chain is SH3 domain-binding glutamic acid-rich-like protein 2 (sh3bgrl2), found in Danio rerio (Zebrafish).